Consider the following 704-residue polypeptide: Ion-translocating oxidoreductase complex subunit C (704 aa).

2 4Fe-4S ferredoxin-type domains span residues methionine 368 to tyrosine 397 and lysine 407 to phenylalanine 436. Cysteine 377, cysteine 380, cysteine 383, cysteine 387, cysteine 416, cysteine 419, cysteine 422, and cysteine 426 together coordinate [4Fe-4S] cluster. A disordered region spans residues glutamine 534–alanine 682.

This sequence belongs to the 4Fe4S bacterial-type ferredoxin family. RnfC subfamily. The complex is composed of six subunits: RsxA, RsxB, RsxC, RsxD, RsxE and RsxG. [4Fe-4S] cluster is required as a cofactor.

The protein resides in the cell inner membrane. In terms of biological role, part of a membrane-bound complex that couples electron transfer with translocation of ions across the membrane. Required to maintain the reduced state of SoxR. The protein is Ion-translocating oxidoreductase complex subunit C of Salmonella enteritidis PT4 (strain P125109).